A 3470-amino-acid chain; its full sequence is Mucin-4 (3470 aa).

A signal peptide spans M1 to A28. The tract at residues T32 to G163 is disordered. The segment covering S37 to S57 has biased composition (low complexity). O-linked (GalNAc...) threonine glycosylation is found at T42, T44, T65, T68, T87, T91, T96, T97, T98, T99, T100, T103, T104, T106, T117, T130, T131, T132, T145, T146, T150, T151, T152, and T155. Positions R43–S2501 are variable number of tandem repeats (VNTR). Residues E66 to H85 are compositionally biased toward polar residues. Low complexity predominate over residues T86–S111. The segment covering R112–G129 has biased composition (polar residues). The segment covering T130–S162 has biased composition (low complexity). The N-linked (GlcNAc...) asparagine glycan is linked to N188. Polar residues predominate over residues T199–V220. 7 disordered regions span residues T199–S679, F691–T925, T938–V1219, L1232–V1400, L1413–V1524, L1537–T1647, and T1660–T1992. A compositionally biased stretch (low complexity) spans T221–T232. Over residues P233–S243 the composition is skewed to polar residues. Residues T236 and T241 are each glycosylated (O-linked (GalNAc...) threonine). Residues S251–T272 show a composition bias toward low complexity. Residues D273–I283 are compositionally biased toward polar residues. N-linked (GlcNAc...) asparagine glycosylation is found at N278 and N286. The segment covering T284–T299 has biased composition (low complexity). O-linked (GalNAc...) threonine glycosylation is present at T297. Polar residues predominate over residues P300 to Q335. N311 carries an N-linked (GlcNAc...) asparagine glycan. A compositionally biased stretch (low complexity) spans T336–T346. Over residues P347 to Q448 the composition is skewed to polar residues. T357, T370, T371, T372, T385, and T423 each carry an O-linked (GalNAc...) threonine glycan. The span at S449–S470 shows a compositional bias: low complexity. N465 carries an N-linked (GlcNAc...) asparagine glycan. A compositionally biased stretch (polar residues) spans T479–P489. T494 carries an O-linked (GalNAc...) threonine glycan. The segment covering H496–M510 has biased composition (low complexity). The segment covering L511–G577 has biased composition (polar residues). T513 carries O-linked (GalNAc...) threonine glycosylation. The N-linked (GlcNAc...) asparagine glycan is linked to N517. O-linked (GalNAc...) threonine glycosylation is found at T542 and T545. N-linked (GlcNAc...) asparagine glycosylation is present at N550. O-linked (GalNAc...) threonine glycans are attached at residues T551, T584, T585, T586, T587, T588, T592, T594, T599, T605, T618, T619, T620, T633, T634, T639, T640, and T655. Over residues T578 to T599 the composition is skewed to low complexity. Residues H600 to P631 are compositionally biased toward polar residues. Over residues S632–S647 the composition is skewed to low complexity. Composition is skewed to polar residues over residues T653–S679 and F691–G701. N-linked (GlcNAc...) asparagine glycosylation is present at N674. O-linked (GalNAc...) threonine glycosylation is found at T702, T708, T709, T710, T711, and T716. The span at T702–S723 shows a compositional bias: low complexity. N718 is a glycosylation site (N-linked (GlcNAc...) asparagine). Positions R724–E741 are enriched in polar residues. Positions T742–V772 are enriched in low complexity. 4 O-linked (GalNAc...) threonine glycosylation sites follow: T743, T744, T757, and T758. The span at V780–K824 shows a compositional bias: polar residues. A glycan (N-linked (GlcNAc...) asparagine) is linked at N798. Residues G825 to G848 are compositionally biased toward low complexity. Residues T826, T832, T833, T834, T839, T840, T842, T846, and T853 are each glycosylated (O-linked (GalNAc...) threonine). Residues D849–P879 show a composition bias toward polar residues. N875 is a glycosylation site (N-linked (GlcNAc...) asparagine). A compositionally biased stretch (low complexity) spans S880–S895. O-linked (GalNAc...) threonine glycosylation is found at T901 and T902. The segment covering T901 to T925 has biased composition (polar residues). N922 is a glycosylation site (N-linked (GlcNAc...) asparagine). Over residues K948–S968 the composition is skewed to low complexity. O-linked (GalNAc...) threonine glycans are attached at residues T950, T952, T956, T957, T958, T959, T963, and T964. N966 carries N-linked (GlcNAc...) asparagine glycosylation. The span at A969–P1003 shows a compositional bias: polar residues. O-linked (GalNAc...) threonine glycosylation is found at T990, T991, T992, T1005, T1006, T1011, T1012, and T1015. The span at S1004–S1019 shows a compositional bias: low complexity. Positions V1020 to Q1065 are enriched in polar residues. N1024 carries N-linked (GlcNAc...) asparagine glycosylation. Residues T1025, T1026, T1027, T1029, and T1038 are each glycosylated (O-linked (GalNAc...) threonine). N-linked (GlcNAc...) asparagine glycosylation is found at N1046, N1072, and N1091. Residues S1066–T1083 are compositionally biased toward low complexity. A compositionally biased stretch (polar residues) spans N1091 to S1120. Residues S1121–T1140 are compositionally biased toward low complexity. O-linked (GalNAc...) threonine glycosylation is found at T1125, T1126, T1127, T1128, T1132, T1133, T1135, T1140, T1174, T1198, and T1207. Polar residues-rich tracts occupy residues H1141 to V1219 and L1232 to G1242. Residue N1215 is glycosylated (N-linked (GlcNAc...) asparagine). Residues T1243, T1245, T1249, T1250, T1251, T1252, T1256, T1257, T1259, T1263, T1270, T1283, T1284, T1285, T1298, T1299, T1304, T1305, T1318, and T1319 are each glycosylated (O-linked (GalNAc...) threonine). The segment covering T1243–S1264 has biased composition (low complexity). Residues R1265–P1296 are compositionally biased toward polar residues. Residues S1297 to S1312 are compositionally biased toward low complexity. Over residues T1318–P1353 the composition is skewed to polar residues. N1339 carries an N-linked (GlcNAc...) asparagine glycan. 11 O-linked (GalNAc...) threonine glycosylation sites follow: T1341, T1342, T1355, T1356, T1365, T1368, T1372, T1375, T1376, T1377, and T1379. Over residues S1354–V1390 the composition is skewed to low complexity. Polar residues-rich tracts occupy residues L1391 to V1400 and L1413 to P1477. N-linked (GlcNAc...) asparagine glycosylation occurs at N1396. O-linked (GalNAc...) threonine glycans are attached at residues T1426, T1430, T1431, T1440, T1451, T1453, T1464, T1465, and T1466. N1471 carries an N-linked (GlcNAc...) asparagine glycan. The segment covering S1478–T1489 has biased composition (low complexity). 4 O-linked (GalNAc...) threonine glycosylation sites follow: T1479, T1480, T1499, and T1512. 2 stretches are compositionally biased toward polar residues: residues Q1490 to V1524 and L1537 to Q1553. A glycan (N-linked (GlcNAc...) asparagine) is linked at N1520. O-linked (GalNAc...) threonine glycosylation is found at T1554, T1555, T1557, and T1562. Low complexity predominate over residues T1554–S1569. Over residues R1570–E1587 the composition is skewed to polar residues. O-linked (GalNAc...) threonine glycans are attached at residues T1588, T1589, T1590, T1604, T1609, T1627, T1635, and T1636. Positions T1588 to T1609 are enriched in low complexity. Residues A1610 to T1647 are compositionally biased toward polar residues. N1644 is a glycosylation site (N-linked (GlcNAc...) asparagine). Over residues K1670–S1693 the composition is skewed to low complexity. Residues T1672, T1674, T1678, T1679, T1680, T1681, T1685, T1686, T1688, T1699, and T1714 are each glycosylated (O-linked (GalNAc...) threonine). Residues R1694 to P1725 show a composition bias toward polar residues. Residue N1721 is glycosylated (N-linked (GlcNAc...) asparagine). Positions S1726–G1742 are enriched in low complexity. Polar residues predominate over residues T1747–E1837. Residue N1770 is glycosylated (N-linked (GlcNAc...) asparagine). Residues T1838, T1839, T1840, T1854, T1873, T1874, T1888, T1889, and T1891 are each glycosylated (O-linked (GalNAc...) threonine). Residues T1838–T1859 show a composition bias toward low complexity. Residues A1860–V1877 show a composition bias toward polar residues. Residues T1878 to Q1895 show a composition bias toward low complexity. An N-linked (GlcNAc...) asparagine glycan is attached at N1896. Residues N1896 to N1927 are compositionally biased toward polar residues. Low complexity predominate over residues P1928–S1945. T1930, T1931, T1932, T1933, T1937, T1938, T1940, T1964, T1965, T1966, and T1980 each carry an O-linked (GalNAc...) threonine glycan. The segment covering Y1946–T1992 has biased composition (polar residues). N-linked (GlcNAc...) asparagine glycosylation is present at N2022. Over residues S2037–Q2055 the composition is skewed to polar residues. Disordered stretches follow at residues S2037–H2107, Q2139–P2185, T2205–S2237, and T2262–L2368. 2 O-linked (GalNAc...) threonine glycosylation sites follow: T2056 and T2057. Residues T2056–S2071 show a composition bias toward low complexity. Polar residues predominate over residues R2072–G2089. O-linked (GalNAc...) threonine glycans are attached at residues T2090, T2091, and T2092. The segment covering T2090 to H2107 has biased composition (low complexity). N2104 is a glycosylation site (N-linked (GlcNAc...) asparagine). O-linked (GalNAc...) threonine glycans are attached at residues T2105 and T2106. N-linked (GlcNAc...) asparagine glycosylation is found at N2148, N2182, and N2225. Polar residues-rich tracts occupy residues T2205 to A2229 and T2262 to I2303. Residues T2264, T2352, T2354, T2359, and T2360 are each glycosylated (O-linked (GalNAc...) threonine). A compositionally biased stretch (low complexity) spans T2344–P2367. Residues P2458–E2613 enclose the NIDO domain. The 113-residue stretch at E2614–R2726 folds into the AMOP domain. A VWFD domain is found at R2738–L2937. N-linked (GlcNAc...) asparagine glycans are attached at residues N2755, N2773, N2801, N2827, N2844, N2853, N2888, N2909, N2916, N2932, N2958, N2985, N3003, N3014, N3054, N3079, N3102, N3109, N3157, and N3174. Residues P3173–F3212 enclose the EGF-like 1 domain. 3 disulfides stabilise this stretch: C3177/C3188, C3182/C3200, and C3202/C3211. Residues N3240, N3247, and N3353 are each glycosylated (N-linked (GlcNAc...) asparagine). Residues V3382–E3421 enclose the EGF-like 2 domain. Disulfide bonds link C3385–C3396, C3390–C3405, and C3407–C3420. Residues G3432–F3452 traverse the membrane as a helical segment.

As to quaternary structure, a heterodimeric complex, composed of a mucin-4 alpha chain and a cysteine-rich transmembrane mucin-4 beta chain. Mucin-4 beta chain interacts with ERBB2 via the EGF-like domain 1. In nonpolarized cells, associates with ERBB2 and ERBB3. Post-translationally, proteolytically cleaved into 2 chains, mucin-4 alpha chain and mucin-4 beta chain. Highly O-glycosylated. In terms of processing, predominantly N-glycosylated. As to expression, expressed in trachea, duodenum and intestine. Lower expression in stomach, salivary glands, liver, gallbladder, and kidney.

The protein localises to the cell membrane. The protein resides in the secreted. Membrane-bound mucin, a family of highly glycosylated proteins that constitute the major component of the mucus, the slimy and viscous secretion covering epithelial surfaces. These glycoproteins play important roles in the protection of the epithelium and are implicated in epithelial renewal and differentiation. Regulates cellular behavior through both anti-adhesive effects on cell-cell and cell-extracellular matrix interactions and its ability to act as an intramembrane ligand for ERBB2. Plays an important role in proliferation and differentiation of epithelial cells by inducing specific phosphorylation of ERBB2. In polarized epithelial cells, segregates ERBB2 and other ERBB receptors and prevents ERBB2 from acting as a coreceptor. The interaction with ERBB2 leads to enhanced expression of CDKN1B. The formation of a MUC4-ERBB2-ERBB3-NRG1 complex leads to down-regulation of CDKN1B, resulting in repression of apoptosis and stimulation of proliferation. Its ability to promote tumor growth may be mainly due to repression of apoptosis as opposed to proliferation. The chain is Mucin-4 (Muc4) from Mus musculus (Mouse).